We begin with the raw amino-acid sequence, 307 residues long: NmrA-like family domain-containing oxidoreductase flvB (307 aa).

NADP(+)-binding positions include 4–9 (LITGAT), 32–36 (SSSSP), 53–54 (DY), 74–76 (STN), and 148–151 (YVEG).

The protein belongs to the NmrA-type oxidoreductase family.

It carries out the reaction (2S)-5,5-dimethyl-2,3,4,5-tetrahydropyridine-2,6-dicarboxylate + NADPH + 2 H(+) = (6S)-3,3-dimethylpiperidine-2,6-dicarboxylate + NADP(+). The catalysed reaction is (2S)-5,5-dimethyl-2,3,4,5-tetrahydropyridine-2,6-dicarboxylate + NADH + 2 H(+) = (6S)-3,3-dimethylpiperidine-2,6-dicarboxylate + NAD(+). The protein operates within secondary metabolite biosynthesis; terpenoid biosynthesis. Functionally, nmrA-like family domain-containing oxidoreductase; part of the gene cluster that mediates the biosynthesis of flavunoidine, an alkaloidal terpenoid with a tetracyclic cage-like core connected to dimethylcadaverine via a C-N bond and acylated with 5,5-dimethyl-L-pipecolate. The tetracyclic core is synthesized by the terpene cyclase flvE and the cytochrome P450 monooxygenase flvD. The terpene cyclase flvE catalyzes the cyclization of farnesyl pyrophosphate (FPP) to form (1R,4R,5S)-(+)-acoradiene and the cytochrome P450 monooxygenase flvD is then responsible for oxidative conversion of (1R,4R,5S)-(+)-acoradiene into the tetracyclic cage present in the final product flavunoidine. In parallel, the N-methyltransferase flvH dimethylates L-lysine to give N,N-dimethyl-L-Lysin which is decarboxylated by flvG to afford dimethylcadaverine. The terpene cyclase-like protein flvF is the enzyme that attaches the dimethylcadaverine precusor at the C-7 of the tetracyclic cage to yield pre-flavunoidine. The cytochrome monooxygenase flvC hydroxylates the C-10 position of pre-flavunoidine whereas the NRPS flvI acylates the terpenoid core at the hydroxylated C-10 with dimethylpipecolate to yield final flavunoidine. The bifunctional enzyme flvA and the dehydrogenase flvB are responsible for the synthesis of the dimethylpipecolate precursor. The PLP-dependent lyase domain of flvA might use L-O-acetyl-homoserine and alpha-keto-isovalerate to form an intermediary ketone that can cyclize intramolecularly to yield an imine. The imine can be reduced by flvB to yield the 6-carboxylated pipecolate. The C-terminal alpha-KG-dependent oxygenase domain of flvA is then proposed to catalyze the decarboxylation to yield dimethylpipecolate. The chain is NmrA-like family domain-containing oxidoreductase flvB from Aspergillus flavus (strain ATCC 200026 / FGSC A1120 / IAM 13836 / NRRL 3357 / JCM 12722 / SRRC 167).